The sequence spans 269 residues: Small ribosomal subunit protein uS3 (269 aa).

A KH type-2 domain is found at 38-106 (IREWLHKNLE…QIQLNILEVK (69 aa)). Positions 215–269 (AQKAARQAAQGGRGGRGGNRRGRGDRPDRRGGRRRAEAAKQSAETPAPQTENAGA) are disordered. A compositionally biased stretch (basic and acidic residues) spans 236-252 (GRGDRPDRRGGRRRAEA). Polar residues predominate over residues 256–269 (SAETPAPQTENAGA).

The protein belongs to the universal ribosomal protein uS3 family. In terms of assembly, part of the 30S ribosomal subunit. Forms a tight complex with proteins S10 and S14.

Functionally, binds the lower part of the 30S subunit head. Binds mRNA in the 70S ribosome, positioning it for translation. This is Small ribosomal subunit protein uS3 from Cutibacterium acnes (strain DSM 16379 / KPA171202) (Propionibacterium acnes).